The primary structure comprises 858 residues: Polyhomeotic-like protein 2 (858 aa).

Disordered regions lie at residues M1–Q76, Q230–R307, P337–Q388, L407–P444, K473–Q493, and T529–Q561. 2 stretches are compositionally biased toward low complexity: residues T10–S34 and Q230–T241. Residues S33–D53 are interaction with BMI1. The span at P265–A274 shows a compositional bias: polar residues. The segment covering P337 to Q358 has biased composition (low complexity). Residues A379 to Q388 are compositionally biased toward polar residues. Over residues K473–P483 the composition is skewed to basic and acidic residues. Positions T537–A551 are enriched in low complexity. The HD1 motif lies at K558 to V587. Residues K598 and K600 each participate in a glycyl lysine isopeptide (Lys-Gly) (interchain with G-Cter in SUMO2) cross-link. Phosphothreonine is present on T619. S621 is modified (phosphoserine). A Glycyl lysine isopeptide (Lys-Gly) (interchain with G-Cter in SUMO2) cross-link involves residue K632. The FCS-type zinc finger occupies E633–K667. 4 residues coordinate Zn(2+): C642, C645, C661, and C665. Disordered stretches follow at residues Q688–V720 and H732–D768. Residue K702 forms a Glycyl lysine isopeptide (Lys-Gly) (interchain with G-Cter in SUMO2) linkage. At S751 the chain carries Phosphoserine. The SAM domain maps to W794–S858. A Glycyl lysine isopeptide (Lys-Gly) (interchain with G-Cter in SUMO2) cross-link involves residue K847.

Component of a PRC1-like complex. Interacts with CBX4. Interacts with BMI1, PCGF2, PHC1 and RNF2. Interacts with CHTOP. Interacts with the N-terminal region of the SP1 transcription factor and with MAPKAPK2. Interacts with SAMD7 and SAMD11.

Its subcellular location is the nucleus. Component of a Polycomb group (PcG) multiprotein PRC1-like complex, a complex class required to maintain the transcriptionally repressive state of many genes, including Hox genes, throughout development. PcG PRC1 complex acts via chromatin remodeling and modification of histones; it mediates monoubiquitination of histone H2A 'Lys-119', rendering chromatin heritably changed in its expressibility. This chain is Polyhomeotic-like protein 2 (PHC2), found in Homo sapiens (Human).